The sequence spans 144 residues: L-fucose mutarotase (144 aa).

The active-site Proton donor is His22. Substrate-binding positions include Asp30, Arg109, and 131 to 133 (YGN).

It belongs to the RbsD / FucU family. FucU mutarotase subfamily. As to quaternary structure, homodecamer.

The protein resides in the cytoplasm. The enzyme catalyses alpha-L-fucose = beta-L-fucose. Its pathway is carbohydrate metabolism; L-fucose metabolism. In terms of biological role, involved in the anomeric conversion of L-fucose. The sequence is that of L-fucose mutarotase from Histophilus somni (strain 129Pt) (Haemophilus somnus).